Here is a 100-residue protein sequence, read N- to C-terminus: NADH-quinone oxidoreductase subunit K (100 aa).

The next 3 helical transmembrane spans lie at 4–24 (YEYY…GVIV), 28–48 (IIAM…AFVA), and 60–80 (VFVF…LGLI).

The protein belongs to the complex I subunit 4L family. As to quaternary structure, NDH-1 is composed of 14 different subunits. Subunits NuoA, H, J, K, L, M, N constitute the membrane sector of the complex.

It is found in the cell inner membrane. The catalysed reaction is a quinone + NADH + 5 H(+)(in) = a quinol + NAD(+) + 4 H(+)(out). Its function is as follows. NDH-1 shuttles electrons from NADH, via FMN and iron-sulfur (Fe-S) centers, to quinones in the respiratory chain. The immediate electron acceptor for the enzyme in this species is believed to be ubiquinone. Couples the redox reaction to proton translocation (for every two electrons transferred, four hydrogen ions are translocated across the cytoplasmic membrane), and thus conserves the redox energy in a proton gradient. This is NADH-quinone oxidoreductase subunit K from Sulfurihydrogenibium azorense (strain DSM 15241 / OCM 825 / Az-Fu1).